A 255-amino-acid chain; its full sequence is MQQQQTLSNSFLSRTFVLLYGVFCYFTFLLTCVYAVGFIGNIFLPKSLDSKSQESLVTALLIDVGLLGIFALQHSVMARKQFKAWWTRLIPKPMERSTYVLFSSLALMLVFWQWHPIGITIWNFDNLVGQIIFYSLFALGWVIVLVSTFLINHFDLFGLRQVYLYFEEKEYTPLKFKTPAFYQYVRHPLYVGWFLVFWMTPIMTVAHLVFASVTTIYILVAIQLEEKDLVAIHGEKYENYRRQVPMLIPFIGKKS.

A run of 5 helical transmembrane segments spans residues 16-36 (FVLLYGVFCYFTFLLTCVYAV), 56-76 (LVTALLIDVGLLGIFALQHSV), 99-119 (YVLFSSLALMLVFWQWHPIGI), 131-151 (IIFYSLFALGWVIVLVSTFLI), and 191-211 (VGWFLVFWMTPIMTVAHLVFA).

Belongs to the nurim family.

The protein localises to the membrane. The catalysed reaction is methanethiol + S-adenosyl-L-methionine = dimethyl sulfide + S-adenosyl-L-homocysteine + H(+). Catalyzes the methylation of methanethiol (MeSH) to yield dimethylsulphide (DMS). The chain is Methanethiol S-methyltransferase from Crocosphaera subtropica (strain ATCC 51142 / BH68) (Cyanothece sp. (strain ATCC 51142)).